The following is a 140-amino-acid chain: Small ribosomal subunit protein eS17y (140 aa).

It belongs to the eukaryotic ribosomal protein eS17 family.

This chain is Small ribosomal subunit protein eS17y (RPS17B), found in Arabidopsis thaliana (Mouse-ear cress).